The chain runs to 299 residues: Protoheme IX farnesyltransferase 1 (299 aa).

The next 9 membrane-spanning stretches (helical) occupy residues valine 24–proline 44, alanine 46–valine 66, leucine 97–alanine 117, leucine 118–leucine 138, isoleucine 146–glycine 166, alanine 170–leucine 190, leucine 217–glycine 237, alanine 239–valine 259, and isoleucine 278–leucine 298.

This sequence belongs to the UbiA prenyltransferase family. Protoheme IX farnesyltransferase subfamily.

The protein resides in the cell inner membrane. It catalyses the reaction heme b + (2E,6E)-farnesyl diphosphate + H2O = Fe(II)-heme o + diphosphate. It functions in the pathway porphyrin-containing compound metabolism; heme O biosynthesis; heme O from protoheme: step 1/1. In terms of biological role, converts heme B (protoheme IX) to heme O by substitution of the vinyl group on carbon 2 of heme B porphyrin ring with a hydroxyethyl farnesyl side group. This is Protoheme IX farnesyltransferase 1 from Chromobacterium violaceum (strain ATCC 12472 / DSM 30191 / JCM 1249 / CCUG 213 / NBRC 12614 / NCIMB 9131 / NCTC 9757 / MK).